We begin with the raw amino-acid sequence, 429 residues long: 4-hydroxyphenylacetate degradation bifunctional isomerase/decarboxylase (429 aa).

2 Approximate repeats span residues 1-215 (MKGT…RKSF) and 216-429 (PTLP…ETAK). 3 residues coordinate a divalent metal cation: glutamate 276, glutamate 278, and aspartate 307.

The protein belongs to the FAH family. Monomer. Mg(2+) serves as cofactor.

The catalysed reaction is (2E,4Z)-5-hydroxypenta-2,4-diene-1,2,5-tricarboxylate = (3E,5R)-5-carboxy-2-oxohept-3-enedioate. The enzyme catalyses (3E,5R)-5-carboxy-2-oxohept-3-enedioate + H(+) = (4Z)-2-oxohept-4-enedioate + CO2. It participates in aromatic compound metabolism; 4-hydroxyphenylacetate degradation; pyruvate and succinate semialdehyde from 4-hydroxyphenylacetate: step 4/7. Its pathway is aromatic compound metabolism; 4-hydroxyphenylacetate degradation; pyruvate and succinate semialdehyde from 4-hydroxyphenylacetate: step 5/7. Its function is as follows. Decarboxylates OPET (5-oxo-pent-3-ene-1,2,5-tricarboxylic acid) into HHDD (2-hydroxy-hept-2,4-diene-1,7-dioate) and isomerizes it to OHED (2-oxo-hept-3-ene-1,7-dioate). This Escherichia coli protein is 4-hydroxyphenylacetate degradation bifunctional isomerase/decarboxylase (hpaG).